Consider the following 733-residue polypeptide: Polyribonucleotide nucleotidyltransferase (733 aa).

Positions 488 and 494 each coordinate Mg(2+). A KH domain is found at 555–614; the sequence is PRIEVMNIAVDKIRDVIGTGGKVIREIVEQTGAKINIEDDGTIRIASADAKTIEAAKRWI. Residues 624–692 enclose the S1 motif domain; the sequence is GVIYQGTVVK…ERGKVRLSMK (69 aa). Basic and acidic residues predominate over residues 711–722; the sequence is EQEKYTEETHKS. The disordered stretch occupies residues 711-733; the sequence is EQEKYTEETHKSENKRRRKKKEE. Basic residues predominate over residues 723–733; it reads ENKRRRKKKEE.

It belongs to the polyribonucleotide nucleotidyltransferase family. It depends on Mg(2+) as a cofactor.

The protein localises to the cytoplasm. The enzyme catalyses RNA(n+1) + phosphate = RNA(n) + a ribonucleoside 5'-diphosphate. In terms of biological role, involved in mRNA degradation. Catalyzes the phosphorolysis of single-stranded polyribonucleotides processively in the 3'- to 5'-direction. The sequence is that of Polyribonucleotide nucleotidyltransferase from Bartonella henselae (strain ATCC 49882 / DSM 28221 / CCUG 30454 / Houston 1) (Rochalimaea henselae).